Reading from the N-terminus, the 67-residue chain is Large ribosomal subunit protein bL35 (67 aa).

It belongs to the bacterial ribosomal protein bL35 family.

In Rhizorhabdus wittichii (strain DSM 6014 / CCUG 31198 / JCM 15750 / NBRC 105917 / EY 4224 / RW1) (Sphingomonas wittichii), this protein is Large ribosomal subunit protein bL35.